Reading from the N-terminus, the 425-residue chain is Cysteate synthase (425 aa).

Lys-106 carries the N6-(pyridoxal phosphate)lysine modification. Pyridoxal 5'-phosphate contacts are provided by Asn-132 and Thr-382.

The protein belongs to the threonine synthase family. Cysteate synthase subfamily. Homotrimer. Pyridoxal 5'-phosphate serves as cofactor.

The enzyme catalyses O-phospho-L-serine + sulfite + H(+) = L-cysteate + phosphate. Its pathway is cofactor biosynthesis; coenzyme M biosynthesis. Specifically catalyzes the beta-elimination of phosphate from L-phosphoserine and the beta-addition of sulfite to the dehydroalanine intermediate to produce L-cysteate. This chain is Cysteate synthase, found in Methanosphaerula palustris (strain ATCC BAA-1556 / DSM 19958 / E1-9c).